The following is a 423-amino-acid chain: Glucose-1-phosphate adenylyltransferase (423 aa).

Residues Y98, G163, 178-179 (EK), and S189 each bind alpha-D-glucose 1-phosphate.

Belongs to the bacterial/plant glucose-1-phosphate adenylyltransferase family. In terms of assembly, homotetramer.

The enzyme catalyses alpha-D-glucose 1-phosphate + ATP + H(+) = ADP-alpha-D-glucose + diphosphate. The protein operates within glycan biosynthesis; glycogen biosynthesis. Involved in the biosynthesis of ADP-glucose, a building block required for the elongation reactions to produce glycogen. Catalyzes the reaction between ATP and alpha-D-glucose 1-phosphate (G1P) to produce pyrophosphate and ADP-Glc. The sequence is that of Glucose-1-phosphate adenylyltransferase from Thermotoga maritima (strain ATCC 43589 / DSM 3109 / JCM 10099 / NBRC 100826 / MSB8).